A 361-amino-acid polypeptide reads, in one-letter code: MLTEVCKMGTNKAFFTNEVPEDRYIAAEKISSLKKPATVMIIGDVDTGKTTLTIYLANELISRGFRVSIIDSDVGQKSILPPATISLAFVDTHFSSLEDLTPFAHYFVGTITPSQFFGEMVIGVMKLAELAKKFSDVVLIDTTGMIYGPGVELKRMKIEAIKPDLILALERENELTPIIKGFEDITLKLRVSDKVKEFSRSERKELRREKWKRYFENSRIVTFNVNDILVTGTSMFQGKPIEEGEKNLLERLFKWLILHGRKLGERYFVVKVDTSEGPRVVDKNVVRYFDFSKLSNLLLGLLDKEGFCQGVGILKAINFSEGRLEVLTPVKDISIITEIRFGRIRVREDGEELGLLDREVL.

43–50 contributes to the ATP binding site; the sequence is GDVDTGKT.

A divalent metal cation serves as cofactor.

It catalyses the reaction a 5'-end dephospho-2'-deoxyribonucleoside-DNA + ATP = a 5'-end 5'-phospho-2'-deoxyribonucleoside-DNA + ADP + H(+). The catalysed reaction is a 5'-end dephospho-ribonucleoside-RNA + ATP = a 5'-end 5'-phospho-ribonucleoside-RNA + ADP + H(+). DNA kinase activity is inhibited by 250 mM sodium chloride whereas RNA kinase activity is unaffected. Polynucleotide kinase that can phosphorylate the 5'-hydroxyl groups of both single-stranded RNA (ssRNA) and single-stranded DNA (ssDNA). Exhibits a strong preference for ssRNA. This is Polyribonucleotide 5'-hydroxyl-kinase PH0197 from Pyrococcus horikoshii (strain ATCC 700860 / DSM 12428 / JCM 9974 / NBRC 100139 / OT-3).